Reading from the N-terminus, the 707-residue chain is Elongation factor G (707 aa).

The tr-type G domain occupies 8-288 (QFTRNIGIMA…AVCKFLPSPA (281 aa)). GTP-binding positions include 17–24 (AHIDAGKT), 85–89 (DTPGH), and 139–142 (NKMD). The disordered stretch occupies residues 288–308 (ADTPTVEGTDPSDPNKVIERK).

The protein belongs to the TRAFAC class translation factor GTPase superfamily. Classic translation factor GTPase family. EF-G/EF-2 subfamily.

It localises to the cytoplasm. Catalyzes the GTP-dependent ribosomal translocation step during translation elongation. During this step, the ribosome changes from the pre-translocational (PRE) to the post-translocational (POST) state as the newly formed A-site-bound peptidyl-tRNA and P-site-bound deacylated tRNA move to the P and E sites, respectively. Catalyzes the coordinated movement of the two tRNA molecules, the mRNA and conformational changes in the ribosome. This is Elongation factor G from Porphyromonas gingivalis (strain ATCC 33277 / DSM 20709 / CIP 103683 / JCM 12257 / NCTC 11834 / 2561).